Reading from the N-terminus, the 37-residue chain is Large ribosomal subunit protein bL36c (37 aa).

It belongs to the bacterial ribosomal protein bL36 family.

The protein resides in the plastid. The protein localises to the chloroplast. The protein is Large ribosomal subunit protein bL36c of Phaseolus angularis (Azuki bean).